A 93-amino-acid chain; its full sequence is Aspartyl/glutamyl-tRNA(Asn/Gln) amidotransferase subunit C (93 aa).

This sequence belongs to the GatC family. In terms of assembly, heterotrimer of A, B and C subunits.

It catalyses the reaction L-glutamyl-tRNA(Gln) + L-glutamine + ATP + H2O = L-glutaminyl-tRNA(Gln) + L-glutamate + ADP + phosphate + H(+). The enzyme catalyses L-aspartyl-tRNA(Asn) + L-glutamine + ATP + H2O = L-asparaginyl-tRNA(Asn) + L-glutamate + ADP + phosphate + 2 H(+). In terms of biological role, allows the formation of correctly charged Asn-tRNA(Asn) or Gln-tRNA(Gln) through the transamidation of misacylated Asp-tRNA(Asn) or Glu-tRNA(Gln) in organisms which lack either or both of asparaginyl-tRNA or glutaminyl-tRNA synthetases. The reaction takes place in the presence of glutamine and ATP through an activated phospho-Asp-tRNA(Asn) or phospho-Glu-tRNA(Gln). In Methanococcoides burtonii (strain DSM 6242 / NBRC 107633 / OCM 468 / ACE-M), this protein is Aspartyl/glutamyl-tRNA(Asn/Gln) amidotransferase subunit C.